We begin with the raw amino-acid sequence, 489 residues long: Protein nucleotidyltransferase YdiU (489 aa).

Positions 88, 90, 91, 111, 123, 124, 174, and 181 each coordinate ATP. The active-site Proton acceptor is Asp250. Mg(2+) is bound by residues Asn251 and Asp260. Asp260 serves as a coordination point for ATP.

The protein belongs to the SELO family. It depends on Mg(2+) as a cofactor. Mn(2+) serves as cofactor.

It catalyses the reaction L-seryl-[protein] + ATP = 3-O-(5'-adenylyl)-L-seryl-[protein] + diphosphate. The catalysed reaction is L-threonyl-[protein] + ATP = 3-O-(5'-adenylyl)-L-threonyl-[protein] + diphosphate. The enzyme catalyses L-tyrosyl-[protein] + ATP = O-(5'-adenylyl)-L-tyrosyl-[protein] + diphosphate. It carries out the reaction L-histidyl-[protein] + UTP = N(tele)-(5'-uridylyl)-L-histidyl-[protein] + diphosphate. It catalyses the reaction L-seryl-[protein] + UTP = O-(5'-uridylyl)-L-seryl-[protein] + diphosphate. The catalysed reaction is L-tyrosyl-[protein] + UTP = O-(5'-uridylyl)-L-tyrosyl-[protein] + diphosphate. In terms of biological role, nucleotidyltransferase involved in the post-translational modification of proteins. It can catalyze the addition of adenosine monophosphate (AMP) or uridine monophosphate (UMP) to a protein, resulting in modifications known as AMPylation and UMPylation. The polypeptide is Protein nucleotidyltransferase YdiU (Vibrio cholerae serotype O1 (strain ATCC 39315 / El Tor Inaba N16961)).